A 294-amino-acid chain; its full sequence is Nucleotide-binding protein Cbei_4857 (294 aa).

ATP is bound at residue 8–15 (GLSGAGKT). Position 59–62 (59–62 (DIRG)) interacts with GTP.

This sequence belongs to the RapZ-like family.

Its function is as follows. Displays ATPase and GTPase activities. In Clostridium beijerinckii (strain ATCC 51743 / NCIMB 8052) (Clostridium acetobutylicum), this protein is Nucleotide-binding protein Cbei_4857.